The chain runs to 427 residues: MSAIVDIIGREILDSRGNPTVECDVLLESGTMGRAAVPSGASTGSREAIELRDGEAGRYNGKGVLKAVEHINTEISEAIMGLDASEQAFLDKTLLELDGTDNKSRLGANAMLAVSMAVAKAAAEEAGLPLYRYFGGSGAMQLPVPMMNIVNGGAHANNSLDIQEFMIVPVSQPTFREALRCGAEVFHALKKILSDRGMSTAVGDEGGFAPNFGSNDECLSTILQAIEKAGYRAGEDVLLALDCAASEFYHDGKYQLAGEGLQLSSAEFTDYLATLADKFPIVSIEDGMHESDWDGWKLLTDRLGKKVQLVGDDLFVTNTRILKEGIEKGIANSILIKINQIGTLTETFAAIEMAKRAGYTAVISHRSGETEDSTIADIAVGLNAGQIKTGSLSRSDRISKYNQLLRIEEDLGDIASYPGKSAFYNLR.

Gln163 is a binding site for (2R)-2-phosphoglycerate. Glu205 functions as the Proton donor in the catalytic mechanism. Mg(2+)-binding residues include Asp242, Glu285, and Asp312. Positions 337, 366, 367, and 388 each coordinate (2R)-2-phosphoglycerate. Catalysis depends on Lys337, which acts as the Proton acceptor.

This sequence belongs to the enolase family. Requires Mg(2+) as cofactor.

The protein localises to the cytoplasm. It is found in the secreted. Its subcellular location is the cell surface. The catalysed reaction is (2R)-2-phosphoglycerate = phosphoenolpyruvate + H2O. It participates in carbohydrate degradation; glycolysis; pyruvate from D-glyceraldehyde 3-phosphate: step 4/5. In terms of biological role, catalyzes the reversible conversion of 2-phosphoglycerate (2-PG) into phosphoenolpyruvate (PEP). It is essential for the degradation of carbohydrates via glycolysis. The chain is Enolase from Burkholderia orbicola (strain MC0-3).